Here is a 64-residue protein sequence, read N- to C-terminus: Purotoxin-2 (64 aa).

Positions 1–44 (AKACTPLLHDCSHDRHSCCRGDMFKYVCDCFYPEGEDKTEVCSC) are knottin domain. Cystine bridges form between Cys4–Cys19, Cys11–Cys28, Cys18–Cys44, and Cys30–Cys42. The segment at 45 to 64 (QQPKSHKIAEKIIDKAKTTL) is linear cationic cytotoxin domain. The residue at position 64 (Leu64) is a Leucine amide.

The protein belongs to the neurotoxin 19 (CSTX) family. 05 (U4-Lctx) subfamily. In terms of processing, amidation at Leu-64 is not mandatory for activity on P2RX3. In terms of tissue distribution, expressed by the venom gland.

The protein resides in the secreted. Functionally, enhances the high-affinity desensitization of human P2RX3 purinoceptors. At 50 nM, the toxin decreases the IC(50) for ambient ATP from 2.67 nM to 0.77 nM in human P2RX3. In Alopecosa marikovskyi (Wolf spider), this protein is Purotoxin-2.